The sequence spans 454 residues: Ig mu chain C region (454 aa).

The segment at 1–105 (SPSSPTVFPL…NKDLRVPIPV (105 aa)) is CH1. An intrachain disulfide couples Cys27 to Cys88. Residues Asn45, Asn112, Asn192, Asn210, Asn238, Asn257, and Asn280 are each glycosylated (N-linked (GlcNAc...) asparagine). A CH2 region spans residues 106–218 (VTEMNPNVSV…KNVSSTCAAS (113 aa)). A disulfide bond links Cys135 and Cys198. A CH3 region spans residues 219-324 (PSTDIQAFPI…QKKFISKPRE (106 aa)). 2 disulfides stabilise this stretch: Cys245–Cys304 and Cys352–Cys414. The segment at 325–454 (MNKTPPAVYQ…IMSDAGGTCY (130 aa)) is CH4. Asn441 carries an N-linked (GlcNAc...) asparagine glycan.

This chain is Ig mu chain C region, found in Mesocricetus auratus (Golden hamster).